We begin with the raw amino-acid sequence, 209 residues long: dITP/XTP pyrophosphatase (209 aa).

7–12 lines the substrate pocket; sequence SSHGYK. The active-site Proton acceptor is the aspartate 70. Aspartate 70 is a binding site for Mg(2+). Substrate is bound by residues serine 71, 154-157, lysine 177, and 182-183; these read FGYD and HR.

The protein belongs to the HAM1 NTPase family. In terms of assembly, homodimer. Mg(2+) serves as cofactor.

It carries out the reaction XTP + H2O = XMP + diphosphate + H(+). It catalyses the reaction dITP + H2O = dIMP + diphosphate + H(+). The catalysed reaction is ITP + H2O = IMP + diphosphate + H(+). In terms of biological role, pyrophosphatase that catalyzes the hydrolysis of nucleoside triphosphates to their monophosphate derivatives, with a high preference for the non-canonical purine nucleotides XTP (xanthosine triphosphate), dITP (deoxyinosine triphosphate) and ITP. Seems to function as a house-cleaning enzyme that removes non-canonical purine nucleotides from the nucleotide pool, thus preventing their incorporation into DNA/RNA and avoiding chromosomal lesions. The sequence is that of dITP/XTP pyrophosphatase from Chlamydia trachomatis serovar L2 (strain ATCC VR-902B / DSM 19102 / 434/Bu).